A 226-amino-acid polypeptide reads, in one-letter code: Transmembrane gamma-carboxyglutamic acid protein 4 (226 aa).

Residues 1-17 (MFPLLIVLSQLPRLTLA) form the signal peptide. The propeptide occupies 18–49 (VPHCIRSLKDSEHAPEEVFASKEAANIFMHRR). The Extracellular portion of the chain corresponds to 50–113 (LLNNRFDLEL…GSDVNKEKID (64 aa)). Residues 52 to 98 (NNRFDLELFTPGDLERECYEEFCSYEEAREILGDDENTIKFWQTYSI) form the Gla domain. Residues Cys69 and Cys74 are joined by a disulfide bond. 4-carboxyglutamate is present on Glu72. The helical transmembrane segment at 114-134 (VMSLLTGLIVAGVFLVIFGLV) threads the bilayer. Over 135–226 (GYYVCLTKCK…FKKSMSLPSH (92 aa)) the chain is Cytoplasmic. Ser164 is modified (phosphoserine). An LPXY motif; mediates binding to WW domain-containing proteins motif is present at residues 186–189 (LPSY). The short motif at 204 to 207 (PPPY) is the PPXY motif; mediates binding to WW domain-containing proteins element.

The protein belongs to the commissureless family. In terms of assembly, interacts (via cytoplasmic domain) with WW domain-containing proteins MAGI1, MAGI3, NEDD4, NEDD4L, WWTR1/TAZ and YAP1. Gamma-carboxyglutamate residues are formed by vitamin K dependent carboxylation. These residues are essential for the binding of calcium.

The protein localises to the endoplasmic reticulum-Golgi intermediate compartment membrane. The protein resides in the cell membrane. In terms of biological role, may control axon guidance across the CNS. Prevents the delivery of ROBO1 at the cell surface and down-regulates its expression. The polypeptide is Transmembrane gamma-carboxyglutamic acid protein 4 (Prrg4) (Mus musculus (Mouse)).